A 623-amino-acid polypeptide reads, in one-letter code: Phosphoglucomutase, chloroplastic (623 aa).

The transit peptide at 1 to 63 (MTSTYTRFDT…SSSSSSVVAG (63 aa)) directs the protein to the chloroplast. Alpha-D-glucose 1,6-bisphosphate contacts are provided by R88 and S181. Residue S181 is the Phosphoserine intermediate of the active site. The Mg(2+) site is built by S181, D346, D348, and D350. S181 bears the Phosphoserine mark. 6 residues coordinate alpha-D-glucose 1,6-bisphosphate: D350, R351, T414, E433, S435, and K446.

This sequence belongs to the phosphohexose mutase family. As to quaternary structure, monomer. Mg(2+) serves as cofactor. As to expression, expressed in flowers, siliques and germinating seeds.

It is found in the plastid. The protein localises to the chloroplast. The catalysed reaction is alpha-D-glucose 1-phosphate = alpha-D-glucose 6-phosphate. It catalyses the reaction O-phospho-L-seryl-[protein] + alpha-D-glucose 1-phosphate = alpha-D-glucose 1,6-bisphosphate + L-seryl-[protein]. It carries out the reaction alpha-D-glucose 1,6-bisphosphate + L-seryl-[protein] = O-phospho-L-seryl-[protein] + alpha-D-glucose 6-phosphate. Inhibited by the Calvin cycle intermediates fructose-1,6-bisphosphate and ribulose-1,5-bisphosphate. In terms of biological role, catalyzes the reversible isomerization of alpha-D-glucose 1-phosphate to alpha-D-glucose 6-phosphate. The mechanism proceeds via the intermediate compound alpha-D-glucose 1,6-bisphosphate. This enzyme participates in both the breakdown and synthesis of glucose. Factor that affects seed oil content. Accumulated starch in young embryos may play an important role in providing carbon resources for seed storage lipid biosynthesis in oilseed plants. Promotes gravitropic responses, negative in shoots but positive in roots, by facilitating starch granules (statoliths) formation in hypocotyls and roots columella. In Arabidopsis thaliana (Mouse-ear cress), this protein is Phosphoglucomutase, chloroplastic.